Reading from the N-terminus, the 426-residue chain is Serine--tRNA ligase (426 aa).

233–235 (TAE) is a binding site for L-serine. Residue 264-266 (RSE) participates in ATP binding. Glu-287 provides a ligand contact to L-serine. 351–354 (EISS) provides a ligand contact to ATP. Ser-387 serves as a coordination point for L-serine.

Belongs to the class-II aminoacyl-tRNA synthetase family. Type-1 seryl-tRNA synthetase subfamily. Homodimer. The tRNA molecule binds across the dimer.

The protein localises to the cytoplasm. The catalysed reaction is tRNA(Ser) + L-serine + ATP = L-seryl-tRNA(Ser) + AMP + diphosphate + H(+). It catalyses the reaction tRNA(Sec) + L-serine + ATP = L-seryl-tRNA(Sec) + AMP + diphosphate + H(+). It participates in aminoacyl-tRNA biosynthesis; selenocysteinyl-tRNA(Sec) biosynthesis; L-seryl-tRNA(Sec) from L-serine and tRNA(Sec): step 1/1. In terms of biological role, catalyzes the attachment of serine to tRNA(Ser). Is also able to aminoacylate tRNA(Sec) with serine, to form the misacylated tRNA L-seryl-tRNA(Sec), which will be further converted into selenocysteinyl-tRNA(Sec). This is Serine--tRNA ligase from Pseudomonas syringae pv. syringae (strain B728a).